We begin with the raw amino-acid sequence, 315 residues long: Transposase for insertion sequence element IS640 (315 aa).

The HTH IS21-type domain occupies 5–66 (EDFYMIKQMR…PFMDYIDMRL (62 aa)). The region spanning 111 to 285 (FETQPGYQLQ…TPEQRSRWSR (175 aa)) is the Integrase catalytic domain.

Belongs to the transposase IS21/IS408/IS1162 family.

In terms of biological role, involved in the transposition of the insertion sequence. This Shigella sonnei protein is Transposase for insertion sequence element IS640 (istA).